The primary structure comprises 997 residues: Chromosomal passenger complex protein bir1 (997 aa).

2 BIR repeats span residues 25–99 and 120–194; these read RLDT…PWAY and REQT…VFFT. Residues C163, C166, H183, and C190 each contribute to the Zn(2+) site. Disordered regions lie at residues 217 to 329, 370 to 527, 682 to 701, 755 to 782, and 817 to 838; these read EDLT…FSKG, TVSD…ENDE, TRDVSSPVSDEKSENVNHEE, SPKLQSKNNQTVEAVNTETSDKLQEKEA, and RTSVQNGTRSVSKNTPEKETKV. The segment covering 240–252 has biased composition (polar residues); it reads TLNFSPSRKNNLN. Residues 288 to 299 are compositionally biased toward basic residues; it reads PRRKNKSPKKSK. Residues 311–320 show a composition bias toward acidic residues; sequence SDEDEDDDDL. Residues 370-392 show a composition bias toward polar residues; the sequence is TVSDITGHQSVTDESDEQNNCMS. Positions 408–423 are enriched in low complexity; sequence SVVSKSKEISSSVSSV. The segment covering 426-451 has biased composition (basic and acidic residues); the sequence is EQNHTEKQVAIETPEQQKVEKEDEHL. Polar residues-rich tracts occupy residues 463–476 and 485–512; these read KQPISSKPSTSSPD and RVSSSSFRDKILQTNFSPRSTIDSFSNI. Positions 756 to 772 are enriched in polar residues; it reads PKLQSKNNQTVEAVNTE. Residues 773–782 show a composition bias toward basic and acidic residues; it reads TSDKLQEKEA. The span at 817-830 shows a compositional bias: polar residues; it reads RTSVQNGTRSVSKN.

In terms of assembly, component of the CPC complex at least composed of ark1, bir1 and pic1. Interacts with the mitotic checkpoint complex (MCC) subunit mad3. Phosphorylated by ark1.

The protein localises to the nucleus. It is found in the cytoplasm. Its subcellular location is the cytoskeleton. The protein resides in the spindle. It localises to the chromosome. The protein localises to the centromere. Functionally, component of the chromosomal passenger complex (CPC), a complex that acts as a key regulator of chromosome segregation and cytokinesis. Has a role in chromosome segregation by recruiting condensin and ark1 kinase to appropriate sites as the cell progresses through mitosis. Ark1 activity depends upon bir1 function and phosphorylation. Ark1 with bir1 function is required for full-scale association with kinetochores and formation of a complex with mad3. In Schizosaccharomyces pombe (strain 972 / ATCC 24843) (Fission yeast), this protein is Chromosomal passenger complex protein bir1 (bir1).